Consider the following 106-residue polypeptide: Large ribosomal subunit protein uL24 (106 aa).

Basic and acidic residues predominate over residues 84 to 97 (EKIGRELGAKEKAR). A disordered region spans residues 84-106 (EKIGRELGAKEKARLQKRKTAAK).

The protein belongs to the universal ribosomal protein uL24 family. In terms of assembly, part of the 50S ribosomal subunit.

Its function is as follows. One of two assembly initiator proteins, it binds directly to the 5'-end of the 23S rRNA, where it nucleates assembly of the 50S subunit. One of the proteins that surrounds the polypeptide exit tunnel on the outside of the subunit. The polypeptide is Large ribosomal subunit protein uL24 (Anaeromyxobacter dehalogenans (strain 2CP-1 / ATCC BAA-258)).